Here is a 92-residue protein sequence, read N- to C-terminus: Large ribosomal subunit protein uL23c (92 aa).

This sequence belongs to the universal ribosomal protein uL23 family. As to quaternary structure, part of the 50S ribosomal subunit.

Its subcellular location is the plastid. It localises to the chloroplast. Its function is as follows. Binds to 23S rRNA. This chain is Large ribosomal subunit protein uL23c (rpl23), found in Mesostigma viride (Green alga).